The primary structure comprises 307 residues: 4-hydroxythreonine-4-phosphate dehydrogenase (307 aa).

The substrate site is built by His126 and Thr127. Positions 156, 195, and 251 each coordinate a divalent metal cation. Substrate is bound by residues Lys259, Asn268, and Arg277.

The protein belongs to the PdxA family. In terms of assembly, homodimer. Requires Zn(2+) as cofactor. The cofactor is Mg(2+). It depends on Co(2+) as a cofactor.

It localises to the cytoplasm. The enzyme catalyses 4-(phosphooxy)-L-threonine + NAD(+) = 3-amino-2-oxopropyl phosphate + CO2 + NADH. The protein operates within cofactor biosynthesis; pyridoxine 5'-phosphate biosynthesis; pyridoxine 5'-phosphate from D-erythrose 4-phosphate: step 4/5. Functionally, catalyzes the NAD(P)-dependent oxidation of 4-(phosphooxy)-L-threonine (HTP) into 2-amino-3-oxo-4-(phosphooxy)butyric acid which spontaneously decarboxylates to form 3-amino-2-oxopropyl phosphate (AHAP). The chain is 4-hydroxythreonine-4-phosphate dehydrogenase from Helicobacter pylori (strain ATCC 700392 / 26695) (Campylobacter pylori).